Reading from the N-terminus, the 225-residue chain is Membrane protein (225 aa).

Residues 1–20 (MSNETNCTLDFEQSVELFKE) lie on the Virion surface side of the membrane. The helical transmembrane segment at 21-41 (YNLFITAFLLFLTIILQYGYA) threads the bilayer. Topologically, residues 42–51 (TRSKFIYILK) are intravirion. A helical transmembrane segment spans residues 52 to 72 (MIVLWCFWPLNIAVGVISCIY). Residues 73 to 77 (PPNTG) are Virion surface-facing. The helical transmembrane segment at 78–98 (GLVAAIILTVFACLSFVGYWI) threads the bilayer. Residues 99 to 225 (QSIRLFKRCR…VATGGSSLYT (127 aa)) are Intravirion-facing.

Belongs to the gammacoronaviruses M protein family. Homomultimer. Interacts with envelope E protein in the budding compartment of the host cell, which is located between endoplasmic reticulum and the Golgi complex. Forms a complex with HE and S proteins. Interacts with nucleocapsid N protein. This interaction probably participates in RNA packaging into the virus.

Its subcellular location is the virion membrane. It is found in the host Golgi apparatus membrane. Its function is as follows. Component of the viral envelope that plays a central role in virus morphogenesis and assembly via its interactions with other viral proteins. The chain is Membrane protein from Gallus gallus (Chicken).